Consider the following 531-residue polypeptide: MSQEILDQVRRRRTFAIISHPDAGKTTLTEKLLLFSGAIQSAGTVKGKKTGKFATSDWMDIEKQRGISVASSVMQFDYKDHTVNLLDTPGHQDFSEDTYRVLTAVDSALMVIDAAKGVEAQTIKLLNVCRLRNTPIVTFMNKYDREVRDSLELLDEVENILQIRCAPVTWPIGMGKNFKGVYHILNDEIYLFEAGGERLPHEFDIIKGIDNPELEQRFPLEIQQLRDEIELVQAASNEFNLDEFLAGELTPVFFGSAINNFGIQEILNSLIEWAPAPKPRDATVRMVEPDEPKFSGFIFKIQANMDPKHRDRIAFLRVCSGKFERGMKMKHLRINREIAASSVVTFMSHDRELVEEAYAGDIIGIPNHGNIQIGDSFSEGEQLTFTGIPFFAPELFRSVRIKNPLKIKQLQKGLQQLGEEGAVQVFKPMSGADLILGAVGVLQFEVVTSRLANEYGVEAVFDNASIWSARWVSCDDKKKLAEFEKANAGNLAIDAGGNLAYLAPNRVNLGLTQERWPDIVFHETREHSVKL.

In terms of domain architecture, tr-type G spans 10-278 (RRRRTFAIIS…SLIEWAPAPK (269 aa)). Residues 19–26 (SHPDAGKT), 87–91 (DTPGH), and 141–144 (NKYD) each bind GTP.

This sequence belongs to the TRAFAC class translation factor GTPase superfamily. Classic translation factor GTPase family. PrfC subfamily.

It localises to the cytoplasm. Functionally, increases the formation of ribosomal termination complexes and stimulates activities of RF-1 and RF-2. It binds guanine nucleotides and has strong preference for UGA stop codons. It may interact directly with the ribosome. The stimulation of RF-1 and RF-2 is significantly reduced by GTP and GDP, but not by GMP. This chain is Peptide chain release factor 3, found in Neisseria meningitidis serogroup A / serotype 4A (strain DSM 15465 / Z2491).